The following is a 574-amino-acid chain: 5'-nucleotidase (574 aa).

Residues 1–26 (MCPRAARAPATLLLALGAVLWPAAGA) form the signal peptide. Zn(2+)-binding residues include Asp36 and His38. The cysteines at positions 51 and 57 are disulfide-linked. Asn53 is a glycosylation site (N-linked (GlcNAc...) asparagine). 4 residues coordinate Zn(2+): Asp85, Asn117, His220, and His243. Asn311 and Asn333 each carry an N-linked (GlcNAc...) asparagine glycan. Cystine bridges form between Cys353/Cys358 and Cys365/Cys387. Residue Arg354 participates in AMP binding. Residue Arg354 participates in IMP binding. Positions 390 and 395 each coordinate AMP. Positions 390 and 395 each coordinate IMP. Residue Asn403 is glycosylated (N-linked (GlcNAc...) asparagine). Residue Phe417 coordinates AMP. Position 417 (Phe417) interacts with IMP. The cysteines at positions 476 and 479 are disulfide-linked. Residues Phe500 and Asp506 each coordinate AMP. Residues Phe500 and Asp506 each contribute to the IMP site. Ser549 carries GPI-anchor amidated serine lipidation. Residues 550 to 574 (TGSHCHGSFSLIFLSLWAVIFVLYQ) constitute a propeptide, removed in mature form.

Belongs to the 5'-nucleotidase family. Homodimer. Zn(2+) is required as a cofactor.

Its subcellular location is the cell membrane. It carries out the reaction a ribonucleoside 5'-phosphate + H2O = a ribonucleoside + phosphate. The enzyme catalyses a 2'-deoxyribonucleoside 5'-phosphate + H2O = a 2'-deoxyribonucleoside + phosphate. It catalyses the reaction dTMP + H2O = thymidine + phosphate. The catalysed reaction is CMP + H2O = cytidine + phosphate. It carries out the reaction IMP + H2O = inosine + phosphate. The enzyme catalyses AMP + H2O = adenosine + phosphate. It catalyses the reaction GMP + H2O = guanosine + phosphate. The catalysed reaction is UMP + H2O = uridine + phosphate. It carries out the reaction dAMP + H2O = 2'-deoxyadenosine + phosphate. The enzyme catalyses dCMP + H2O = 2'-deoxycytidine + phosphate. Its activity is regulated as follows. Inhibited by adenosine 5'-(alpha,beta-methylene)-diphosphate (AMPCP). Functionally, catalyzes the hydrolysis of nucleotide monophosphates, releasing inorganic phosphate and the corresponding nucleoside, with AMP being the preferred substrate. Shows a preference for ribonucleotide monophosphates over their equivalent deoxyribose forms. Other substrates include IMP, UMP, GMP, CMP, dAMP, dCMP, dTMP, NAD and NMN. This chain is 5'-nucleotidase (NT5E), found in Homo sapiens (Human).